Consider the following 205-residue polypeptide: Endoplasmic reticulum membrane protein complex subunit 10 (205 aa).

Positions 1–17 (MLVRLLRVILLASMVFC) are cleaved as a signal peptide. Residues 18-172 (ADILQLSYSD…VKEVSWFQKN (155 aa)) lie on the Lumenal side of the membrane. An N-linked (GlcNAc...) asparagine glycan is attached at asparagine 47. Residues 173–190 (WKMLLLGLLIYNFVAGSA) form a helical membrane-spanning segment. Topologically, residues 191-205 (KKQQQGGAGADQKTE) are cytoplasmic.

As to quaternary structure, component of the ER membrane protein complex (EMC).

It localises to the endoplasmic reticulum membrane. In terms of biological role, part of the endoplasmic reticulum membrane protein complex (EMC) that enables the energy-independent insertion into endoplasmic reticulum membranes of newly synthesized membrane proteins. Preferentially accommodates proteins with transmembrane domains that are weakly hydrophobic or contain destabilizing features such as charged and aromatic residues. Involved in the cotranslational insertion of multi-pass membrane proteins in which stop-transfer membrane-anchor sequences become ER membrane spanning helices. It is also required for the post-translational insertion of tail-anchored/TA proteins in endoplasmic reticulum membranes. By mediating the proper cotranslational insertion of N-terminal transmembrane domains in an N-exo topology, with translocated N-terminus in the lumen of the ER, controls the topology of multi-pass membrane proteins. This Saccharomyces cerevisiae (strain ATCC 204508 / S288c) (Baker's yeast) protein is Endoplasmic reticulum membrane protein complex subunit 10.